The following is a 211-amino-acid chain: uncharacterized protein (211 aa).

A coiled-coil region spans residues 105–143 (IEENEFDKVRKSSDKLINEIEKTKSSLREDVKTALSEVR). A helical transmembrane segment spans residues 191 to 211 (QWFTGFVGVVSSVVLIILFYF).

The protein belongs to the CCDC90 family.

It localises to the mitochondrion. The protein localises to the membrane. This is an uncharacterized protein from Schizosaccharomyces pombe (strain 972 / ATCC 24843) (Fission yeast).